The sequence spans 36 residues: Adenylate kinase (36 aa).

10–15 (GAGKGT) lines the ATP pocket. The tract at residues 30–36 (ATGDLFR) is NMP. AMP is bound by residues threonine 31 and arginine 36.

Belongs to the adenylate kinase family. In terms of assembly, monomer.

The protein resides in the cytoplasm. It catalyses the reaction AMP + ATP = 2 ADP. Its pathway is purine metabolism; AMP biosynthesis via salvage pathway; AMP from ADP: step 1/1. Its function is as follows. Catalyzes the reversible transfer of the terminal phosphate group between ATP and AMP. Plays an important role in cellular energy homeostasis and in adenine nucleotide metabolism. The protein is Adenylate kinase (adk) of Streptomyces griseus.